We begin with the raw amino-acid sequence, 354 residues long: GTPase Obg (354 aa).

Residues 1–159 form the Obg domain; it reads MKFLDQCKIY…RWIWLRLKLI (159 aa). The OBG-type G domain maps to 160–328; that stretch reads ADVGLVGLPN…LLRAAYKQVR (169 aa). Residues 166–173, 191–195, 213–216, 280–283, and 309–311 each bind GTP; these read GLPNAGKS, FTTLT, DIPG, NKID, and SGV. Mg(2+)-binding residues include Ser173 and Thr193. Residues 335–345 show a composition bias toward acidic residues; the sequence is EEEIDDDEDHV. The tract at residues 335–354 is disordered; sequence EEEIDDDEDHVDETPGGWTP.

This sequence belongs to the TRAFAC class OBG-HflX-like GTPase superfamily. OBG GTPase family. As to quaternary structure, monomer. Requires Mg(2+) as cofactor.

It localises to the cytoplasm. Its function is as follows. An essential GTPase which binds GTP, GDP and possibly (p)ppGpp with moderate affinity, with high nucleotide exchange rates and a fairly low GTP hydrolysis rate. Plays a role in control of the cell cycle, stress response, ribosome biogenesis and in those bacteria that undergo differentiation, in morphogenesis control. The polypeptide is GTPase Obg (Caulobacter vibrioides (strain ATCC 19089 / CIP 103742 / CB 15) (Caulobacter crescentus)).